The following is a 122-amino-acid chain: Large ribosomal subunit protein uL14 (122 aa).

It belongs to the universal ribosomal protein uL14 family. As to quaternary structure, part of the 50S ribosomal subunit. Forms a cluster with proteins L3 and L19. In the 70S ribosome, L14 and L19 interact and together make contacts with the 16S rRNA in bridges B5 and B8.

In terms of biological role, binds to 23S rRNA. Forms part of two intersubunit bridges in the 70S ribosome. This chain is Large ribosomal subunit protein uL14, found in Mycoplasmopsis pulmonis (strain UAB CTIP) (Mycoplasma pulmonis).